The following is a 732-amino-acid chain: 1,4-alpha-glucan branching enzyme GlgB 1 (732 aa).

D411 functions as the Nucleophile in the catalytic mechanism. E464 acts as the Proton donor in catalysis.

Belongs to the glycosyl hydrolase 13 family. GlgB subfamily. Monomer.

The catalysed reaction is Transfers a segment of a (1-&gt;4)-alpha-D-glucan chain to a primary hydroxy group in a similar glucan chain.. It functions in the pathway glycan biosynthesis; glycogen biosynthesis. Its function is as follows. Catalyzes the formation of the alpha-1,6-glucosidic linkages in glycogen by scission of a 1,4-alpha-linked oligosaccharide from growing alpha-1,4-glucan chains and the subsequent attachment of the oligosaccharide to the alpha-1,6 position. The chain is 1,4-alpha-glucan branching enzyme GlgB 1 from Xanthomonas oryzae pv. oryzae (strain KACC10331 / KXO85).